Here is a 72-residue protein sequence, read N- to C-terminus: MAKEDVIEFSGTVTELLPNAMFRVKLDNDHEILAHTSGKMRKNRIRVLAGDRVNVEMTPYDLTKGRITFRYK.

Residues 1 to 72 (MAKEDVIEFS…TKGRITFRYK (72 aa)) enclose the S1-like domain.

Belongs to the IF-1 family. In terms of assembly, component of the 30S ribosomal translation pre-initiation complex which assembles on the 30S ribosome in the order IF-2 and IF-3, IF-1 and N-formylmethionyl-tRNA(fMet); mRNA recruitment can occur at any time during PIC assembly.

Its subcellular location is the cytoplasm. In terms of biological role, one of the essential components for the initiation of protein synthesis. Stabilizes the binding of IF-2 and IF-3 on the 30S subunit to which N-formylmethionyl-tRNA(fMet) subsequently binds. Helps modulate mRNA selection, yielding the 30S pre-initiation complex (PIC). Upon addition of the 50S ribosomal subunit IF-1, IF-2 and IF-3 are released leaving the mature 70S translation initiation complex. The protein is Translation initiation factor IF-1 of Paramagnetospirillum magneticum (strain ATCC 700264 / AMB-1) (Magnetospirillum magneticum).